A 409-amino-acid polypeptide reads, in one-letter code: MDYSQFFNSALDRLHTERRYRVFADLERMAGRFPHAIWHSPKGKRDVVIWCSNDYLGMGQHPKVVGAMVETATRVGTGAGGTRNIAGTHHPLVQLEAELADLHGKEAALLFTSGYVSNQTGIATIAKLIPNCLILSDELNHNSMIEGIRQSGCERQVFRHNDLADLEALLKAAGANRPKLIACESLYSMDGDVAPLAKICDLAEKYNAMTYVDEVHAVGMYGPRGGGIAERDGVMHRIDILEGTLAKAFGCLGGYIAANGQIIDAVRSYAPGFIFTTALPPAICSAATAAIKHLKTSSWERERHQDRAARVKAILNAAGLPVMSSDTHIVPLFIGDAEKCKQASDLLLEEHGIYIQPINYPTVAKGSERLRITPSPYHDDGLIDQLAEALLQVWDRLGLPLKQKSLAAE.

2 residues coordinate substrate: arginine 21 and serine 136. Residues serine 188, histidine 216, and threonine 244 each coordinate pyridoxal 5'-phosphate. Residue lysine 247 is part of the active site. An N6-(pyridoxal phosphate)lysine modification is found at lysine 247. Pyridoxal 5'-phosphate is bound by residues threonine 276 and threonine 277. Substrate is bound at residue threonine 362.

Belongs to the class-II pyridoxal-phosphate-dependent aminotransferase family. Homodimer. Pyridoxal 5'-phosphate is required as a cofactor.

The enzyme catalyses succinyl-CoA + glycine + H(+) = 5-aminolevulinate + CO2 + CoA. The protein operates within porphyrin-containing compound metabolism; protoporphyrin-IX biosynthesis; 5-aminolevulinate from glycine: step 1/1. The polypeptide is 5-aminolevulinate synthase (hemA) (Bradyrhizobium diazoefficiens (strain JCM 10833 / BCRC 13528 / IAM 13628 / NBRC 14792 / USDA 110)).